Consider the following 365-residue polypeptide: MSGNTIGKLFTITTAGESHGEALIGIVDGCPPRLALTEADLQGDLDLRKPGTSCHTSQRHEEDLVKILSGTFEGKTTGTTIALIIQNTDQRSKDYGNIKDTFRPGHADYTYDQKYGFRDYRGGGRSSARETAMRVACGGIAKKYLKQVYGIEIKGYLSQLGPIKAENFDWFEVHNNPFFCPDASKVRTLEEYMDALRKSGDSVGARINITANNMPVGLGEPIFDRLEADIAHGMMSINAVKGVEIGAGFKAITQKGTEHRDAITLSGFKSNHAGGVLGGISSGQDILVSIALKPTSSLRLPIESIDKNGEPIEVVTKGRHDPCVGIRATPIAEAMLAITIMDHVMRHRAQNSNVASITPIIPASI.

Residue R48 participates in NADP(+) binding. FMN contacts are provided by residues R125–S127, N238–A239, G278, K293–S297, and R319.

It belongs to the chorismate synthase family. Homotetramer. It depends on FMNH2 as a cofactor.

The catalysed reaction is 5-O-(1-carboxyvinyl)-3-phosphoshikimate = chorismate + phosphate. It functions in the pathway metabolic intermediate biosynthesis; chorismate biosynthesis; chorismate from D-erythrose 4-phosphate and phosphoenolpyruvate: step 7/7. Functionally, catalyzes the anti-1,4-elimination of the C-3 phosphate and the C-6 proR hydrogen from 5-enolpyruvylshikimate-3-phosphate (EPSP) to yield chorismate, which is the branch point compound that serves as the starting substrate for the three terminal pathways of aromatic amino acid biosynthesis. This reaction introduces a second double bond into the aromatic ring system. In Ruthia magnifica subsp. Calyptogena magnifica, this protein is Chorismate synthase.